Consider the following 1352-residue polypeptide: DNA-directed RNA polymerase subunit beta (1352 aa).

Belongs to the RNA polymerase beta chain family. In terms of assembly, the RNAP catalytic core consists of 2 alpha, 1 beta, 1 beta' and 1 omega subunit. When a sigma factor is associated with the core the holoenzyme is formed, which can initiate transcription.

It carries out the reaction RNA(n) + a ribonucleoside 5'-triphosphate = RNA(n+1) + diphosphate. DNA-dependent RNA polymerase catalyzes the transcription of DNA into RNA using the four ribonucleoside triphosphates as substrates. This Hydrogenovibrio crunogenus (strain DSM 25203 / XCL-2) (Thiomicrospira crunogena) protein is DNA-directed RNA polymerase subunit beta.